The chain runs to 492 residues: Bifunctional purine biosynthesis protein PurH (492 aa).

The MGS-like domain maps to 1 to 144 (MKKAILSVSN…KNYKHVTTIV (144 aa)).

It belongs to the PurH family.

The enzyme catalyses (6R)-10-formyltetrahydrofolate + 5-amino-1-(5-phospho-beta-D-ribosyl)imidazole-4-carboxamide = 5-formamido-1-(5-phospho-D-ribosyl)imidazole-4-carboxamide + (6S)-5,6,7,8-tetrahydrofolate. It carries out the reaction IMP + H2O = 5-formamido-1-(5-phospho-D-ribosyl)imidazole-4-carboxamide. It functions in the pathway purine metabolism; IMP biosynthesis via de novo pathway; 5-formamido-1-(5-phospho-D-ribosyl)imidazole-4-carboxamide from 5-amino-1-(5-phospho-D-ribosyl)imidazole-4-carboxamide (10-formyl THF route): step 1/1. The protein operates within purine metabolism; IMP biosynthesis via de novo pathway; IMP from 5-formamido-1-(5-phospho-D-ribosyl)imidazole-4-carboxamide: step 1/1. This Staphylococcus aureus (strain bovine RF122 / ET3-1) protein is Bifunctional purine biosynthesis protein PurH.